Here is a 110-residue protein sequence, read N- to C-terminus: Iron-sulfur cluster assembly protein CyaY (110 aa).

It belongs to the frataxin family.

In terms of biological role, involved in iron-sulfur (Fe-S) cluster assembly. May act as a regulator of Fe-S biogenesis. The chain is Iron-sulfur cluster assembly protein CyaY from Ectopseudomonas mendocina (strain ymp) (Pseudomonas mendocina).